A 437-amino-acid chain; its full sequence is Eukaryotic peptide chain release factor subunit 1 (437 aa).

An N5-methylglutamine modification is found at Q182. K331 participates in a covalent cross-link: Glycyl lysine isopeptide (Lys-Gly) (interchain with G-Cter in ubiquitin). Position 421 is a phosphoserine (S421).

It belongs to the eukaryotic release factor 1 family. In terms of assembly, component of the eRF1-eRF3-GTP ternary complex, composed of SUP45/eRF1, SUP35/eRF3 and GTP. Interacts with TPA1. In terms of processing, N5-methylated on Gln-182 by MTQ2.

The protein resides in the cytoplasm. Component of the eRF1-eRF3-GTP ternary complex, a ternary complex that mediates translation termination in response to the termination codons. The eRF1-eRF3-GTP complex binds to a stop codon in the ribosomal A-site. SUP45/eRF1 is responsible for stop codon recognition and inducing hydrolysis of peptidyl-tRNA. Following GTP hydrolysis by SUP35/eRF3, SUP35/eRF3 dissociates, permitting SUP45/eRF1 to accommodate fully in the A-site and mediate hydrolysis of peptidyl-tRNA. The protein is Eukaryotic peptide chain release factor subunit 1 (SUP45) of Saccharomyces cerevisiae (strain ATCC 204508 / S288c) (Baker's yeast).